Consider the following 216-residue polypeptide: Elongation factor Ts (216 aa).

The segment at 81-84 (TDFV) is involved in Mg(2+) ion dislocation from EF-Tu.

It belongs to the EF-Ts family.

It localises to the cytoplasm. Functionally, associates with the EF-Tu.GDP complex and induces the exchange of GDP to GTP. It remains bound to the aminoacyl-tRNA.EF-Tu.GTP complex up to the GTP hydrolysis stage on the ribosome. In Geobacter metallireducens (strain ATCC 53774 / DSM 7210 / GS-15), this protein is Elongation factor Ts.